The primary structure comprises 339 residues: Ketol-acid reductoisomerase (NADP(+)) (339 aa).

Residues 1–182 enclose the KARI N-terminal Rossmann domain; it reads MRVYYDRDAD…GGGRSGVIET (182 aa). Residues 24 to 27, Arg-48, Ser-51, Thr-53, and 83 to 86 contribute to the NADP(+) site; these read YGSQ and DEHQ. The active site involves His-108. An NADP(+)-binding site is contributed by Gly-134. In terms of domain architecture, KARI C-terminal knotted spans 183 to 328; that stretch reads TFKEECETDL…AELRAMMPWI (146 aa). Mg(2+) is bound by residues Asp-191, Glu-195, Glu-227, and Glu-231. Residue Ser-252 coordinates substrate.

Belongs to the ketol-acid reductoisomerase family. Mg(2+) is required as a cofactor.

The enzyme catalyses (2R)-2,3-dihydroxy-3-methylbutanoate + NADP(+) = (2S)-2-acetolactate + NADPH + H(+). It carries out the reaction (2R,3R)-2,3-dihydroxy-3-methylpentanoate + NADP(+) = (S)-2-ethyl-2-hydroxy-3-oxobutanoate + NADPH + H(+). The protein operates within amino-acid biosynthesis; L-isoleucine biosynthesis; L-isoleucine from 2-oxobutanoate: step 2/4. It participates in amino-acid biosynthesis; L-valine biosynthesis; L-valine from pyruvate: step 2/4. In terms of biological role, involved in the biosynthesis of branched-chain amino acids (BCAA). Catalyzes an alkyl-migration followed by a ketol-acid reduction of (S)-2-acetolactate (S2AL) to yield (R)-2,3-dihydroxy-isovalerate. In the isomerase reaction, S2AL is rearranged via a Mg-dependent methyl migration to produce 3-hydroxy-3-methyl-2-ketobutyrate (HMKB). In the reductase reaction, this 2-ketoacid undergoes a metal-dependent reduction by NADPH to yield (R)-2,3-dihydroxy-isovalerate. In Rhizorhabdus wittichii (strain DSM 6014 / CCUG 31198 / JCM 15750 / NBRC 105917 / EY 4224 / RW1) (Sphingomonas wittichii), this protein is Ketol-acid reductoisomerase (NADP(+)).